Consider the following 359-residue polypeptide: Phospho-N-acetylmuramoyl-pentapeptide-transferase (359 aa).

10 helical membrane passes run 3-23 (QILV…PALI), 55-75 (VAIV…GLAF), 80-100 (VSAS…VGFL), 117-137 (TAKT…VLQF), 156-176 (IATV…IVSA), 187-207 (LDGL…LITF), 231-251 (LTLI…WNAA), 255-275 (IFMG…LSVT), 280-300 (ILAV…VLQI), and 334-354 (FWLL…GEWL).

Belongs to the glycosyltransferase 4 family. MraY subfamily. It depends on Mg(2+) as a cofactor.

Its subcellular location is the cell membrane. The enzyme catalyses UDP-N-acetyl-alpha-D-muramoyl-L-alanyl-gamma-D-glutamyl-meso-2,6-diaminopimeloyl-D-alanyl-D-alanine + di-trans,octa-cis-undecaprenyl phosphate = di-trans,octa-cis-undecaprenyl diphospho-N-acetyl-alpha-D-muramoyl-L-alanyl-D-glutamyl-meso-2,6-diaminopimeloyl-D-alanyl-D-alanine + UMP. Its pathway is cell wall biogenesis; peptidoglycan biosynthesis. In terms of biological role, catalyzes the initial step of the lipid cycle reactions in the biosynthesis of the cell wall peptidoglycan: transfers peptidoglycan precursor phospho-MurNAc-pentapeptide from UDP-MurNAc-pentapeptide onto the lipid carrier undecaprenyl phosphate, yielding undecaprenyl-pyrophosphoryl-MurNAc-pentapeptide, known as lipid I. The sequence is that of Phospho-N-acetylmuramoyl-pentapeptide-transferase from Mycobacterium leprae (strain TN).